Consider the following 216-residue polypeptide: 4-hydroxy-tetrahydrodipicolinate reductase (216 aa).

Residues 7–12, 71–73, and 95–98 each bind NAD(+); these read GYSGRM, GTT, and AYNF. Histidine 127 functions as the Proton donor/acceptor in the catalytic mechanism. Histidine 128 contacts (S)-2,3,4,5-tetrahydrodipicolinate. The Proton donor role is filled by lysine 131. Residue 137–138 participates in (S)-2,3,4,5-tetrahydrodipicolinate binding; it reads GT.

The protein belongs to the DapB family.

Its subcellular location is the cytoplasm. The enzyme catalyses (S)-2,3,4,5-tetrahydrodipicolinate + NAD(+) + H2O = (2S,4S)-4-hydroxy-2,3,4,5-tetrahydrodipicolinate + NADH + H(+). It catalyses the reaction (S)-2,3,4,5-tetrahydrodipicolinate + NADP(+) + H2O = (2S,4S)-4-hydroxy-2,3,4,5-tetrahydrodipicolinate + NADPH + H(+). Its pathway is amino-acid biosynthesis; L-lysine biosynthesis via DAP pathway; (S)-tetrahydrodipicolinate from L-aspartate: step 4/4. Its function is as follows. Catalyzes the conversion of 4-hydroxy-tetrahydrodipicolinate (HTPA) to tetrahydrodipicolinate. The chain is 4-hydroxy-tetrahydrodipicolinate reductase from Thermotoga sp. (strain RQ2).